Consider the following 338-residue polypeptide: Tryptophan--tRNA ligase (338 aa).

ATP is bound by residues 11–13 (QPS) and 19–20 (GN). The short motif at 12–20 (PSGELSIGN) is the 'HIGH' region element. Asp-135 lines the L-tryptophan pocket. ATP contacts are provided by residues 147–149 (GSD), Val-189, and 198–202 (KMSKS). A 'KMSKS' region motif is present at residues 198-202 (KMSKS).

This sequence belongs to the class-I aminoacyl-tRNA synthetase family. As to quaternary structure, homodimer.

The protein localises to the cytoplasm. The catalysed reaction is tRNA(Trp) + L-tryptophan + ATP = L-tryptophyl-tRNA(Trp) + AMP + diphosphate + H(+). In terms of biological role, catalyzes the attachment of tryptophan to tRNA(Trp). The polypeptide is Tryptophan--tRNA ligase (Vibrio cholerae serotype O1 (strain ATCC 39315 / El Tor Inaba N16961)).